The sequence spans 565 residues: Sulfite reductase [NADPH] hemoprotein beta-component (565 aa).

Residues Cys-429, Cys-435, Cys-474, and Cys-478 each coordinate [4Fe-4S] cluster. Cys-478 lines the siroheme pocket.

Belongs to the nitrite and sulfite reductase 4Fe-4S domain family. As to quaternary structure, alpha(8)-beta(8). The alpha component is a flavoprotein, the beta component is a hemoprotein. It depends on siroheme as a cofactor. [4Fe-4S] cluster serves as cofactor.

The catalysed reaction is hydrogen sulfide + 3 NADP(+) + 3 H2O = sulfite + 3 NADPH + 4 H(+). The protein operates within sulfur metabolism; hydrogen sulfide biosynthesis; hydrogen sulfide from sulfite (NADPH route): step 1/1. Functionally, component of the sulfite reductase complex that catalyzes the 6-electron reduction of sulfite to sulfide. This is one of several activities required for the biosynthesis of L-cysteine from sulfate. This is Sulfite reductase [NADPH] hemoprotein beta-component from Shewanella loihica (strain ATCC BAA-1088 / PV-4).